Consider the following 525-residue polypeptide: GMP synthase [glutamine-hydrolyzing] (525 aa).

The region spanning 9 to 207 is the Glutamine amidotransferase type-1 domain; it reads RILILDFGSQ…VLDICQCEKL (199 aa). Cys86 serves as the catalytic Nucleophile. Catalysis depends on residues His181 and Glu183. Residues 208–400 form the GMPS ATP-PPase domain; sequence WTPDAIIEDA…LGLPYDMLYR (193 aa). An ATP-binding site is contributed by 235 to 241; the sequence is SGGVDSS.

Homodimer.

It catalyses the reaction XMP + L-glutamine + ATP + H2O = GMP + L-glutamate + AMP + diphosphate + 2 H(+). The protein operates within purine metabolism; GMP biosynthesis; GMP from XMP (L-Gln route): step 1/1. Catalyzes the synthesis of GMP from XMP. The sequence is that of GMP synthase [glutamine-hydrolyzing] from Pseudoalteromonas atlantica (strain T6c / ATCC BAA-1087).